The primary structure comprises 197 residues: LexA repressor (197 aa).

The segment at residues 28–47 (VREIARRFRITPRGAQLHLV) is a DNA-binding region (H-T-H motif). Residues Ser-119 and Lys-156 each act as for autocatalytic cleavage activity in the active site.

The protein belongs to the peptidase S24 family. Homodimer.

It carries out the reaction Hydrolysis of Ala-|-Gly bond in repressor LexA.. Represses a number of genes involved in the response to DNA damage (SOS response), including recA and lexA. In the presence of single-stranded DNA, RecA interacts with LexA causing an autocatalytic cleavage which disrupts the DNA-binding part of LexA, leading to derepression of the SOS regulon and eventually DNA repair. The sequence is that of LexA repressor from Thermotoga neapolitana.